Here is a 384-residue protein sequence, read N- to C-terminus: Transcriptional regulator of the unfolded protein response hacA (384 aa).

Over residues 1-18 (MTESTFAVETFSMDSMSP) the composition is skewed to polar residues. 2 disordered regions span residues 1–27 (MTES…IPRL) and 41–94 (LVPE…QRRI). Over residues 84 to 94 (KTEDEKEQRRI) the composition is skewed to basic and acidic residues. In terms of domain architecture, bZIP spans 90 to 153 (EQRRIERVLR…NRLSQQVAKL (64 aa)). The tract at residues 92–101 (RRIERVLRNR) is basic motif. Residues 106–113 (ISRERKRL) form a leucine-zipper region. 2 disordered regions span residues 208–256 (SIPF…PSDL) and 331–384 (PDED…AGAQ). Residues 218–240 (STTTTTTTTTTTSNNISSTSSTT) are compositionally biased toward low complexity.

The protein belongs to the bZIP family.

The protein resides in the nucleus. Functionally, master transcriptional regulator of the unfolded protein response (UPR) that recognizes and binds to the UPR element (UPRE) in the promoter of UPR-regulated genes. Exposure to antifungals and ER-stressing agents initiates the activation of hacA which occurs when a 20 nucleotide fragment is removed from part of the exon-2 and part of intron-2, which in turn promotes the arisen of the DNA binding site motif and a dimer interface domain. Modulates the expression of genes related to cell wall synthesis, ergosterol biosynthesis, pigmentation, heat shock proteins, and the genes coding for mannosyltransferase enzymes. Plays a key role in both response to stress and host-pathogen interaction. The chain is Transcriptional regulator of the unfolded protein response hacA from Trichophyton rubrum (strain ATCC MYA-4607 / CBS 118892) (Athlete's foot fungus).